The chain runs to 300 residues: Merozoite surface protein 2 (300 aa).

The signal sequence occupies residues 1–20; that stretch reads MKVIKTLSIINFFIFVTFNI. Residues Asn22 and Asn36 are each glycosylated (N-linked (GlcNAc...) asparagine). Residues 44 to 226 form a polymorphic region region; the sequence is EESKPPTGAV…EQTESPELQS (183 aa). The 1; inverted repeat unit spans residues 51-58; it reads GAVAGSGA. The segment at 51–74 is 7 X 8 AA tandem repeats of G-S-G-A-G-A-V-A; that stretch reads GAVAGSGAGAGSGAGAVAGSGAGA. 5 tandem repeats follow at residues 61–68, 69–76, 77–84, 85–92, and 93–100. The stretch at 103–110 is one 7; inverted repeat; sequence GAVAGSGA. The disordered stretch occupies residues 111–261; that stretch reads GNGANPGADA…DSQKECTDGN (151 aa). A compositionally biased stretch (low complexity) spans 124-148; that stretch reads PSTPATTTTTTTTNDAEASTSTSSE. Residues 149–165 show a composition bias toward basic and acidic residues; the sequence is NRNHNNAETNPKGKGEV. Polar residues-rich tracts occupy residues 167-193 and 200-228; these read KPNQANKETQNNSNVQQDSQTKSNVPR and KSPTAQPEQAENSAPTAEQTESPELQSAP. Residue Asn177 is glycosylated (N-linked (GlcNAc...) asparagine). An N-linked (GlcNAc...) asparagine glycan is attached at Asn249. A disulfide bridge links Cys257 with Cys265. 2 N-linked (GlcNAc...) asparagine glycosylation sites follow: Asn273 and Asn274. Asn274 carries the GPI-anchor amidated asparagine lipid modification. The propeptide at 275-300 is removed in mature form; sequence SSNIASINKFVVLISATLVLSFAIFI.

It localises to the cell membrane. May play a role in the merozoite attachment to the erythrocyte. The protein is Merozoite surface protein 2 of Plasmodium falciparum (isolate mad71 / Papua New Guinea).